A 949-amino-acid chain; its full sequence is Bifunctional uridylyltransferase/uridylyl-removing enzyme (949 aa).

Residues 1 to 37 (MKETSFWGETPSLSFADDTDKPLSDRTASPPCDPASS) are disordered. The tract at residues 1–395 (MKETSFWGET…TTGEPPKVVP (395 aa)) is uridylyltransferase. The interval 396 to 756 (GPEEFQTIAG…AYPIPERGVT (361 aa)) is uridylyl-removing. In terms of domain architecture, HD spans 516–632 (VDEHIVEAVR…LDLADTIQSP (117 aa)). ACT domains lie at 757–834 (ELTV…LDIR) and 870–949 (VIEV…TPAS).

This sequence belongs to the GlnD family. It depends on Mg(2+) as a cofactor.

The enzyme catalyses [protein-PII]-L-tyrosine + UTP = [protein-PII]-uridylyl-L-tyrosine + diphosphate. It carries out the reaction [protein-PII]-uridylyl-L-tyrosine + H2O = [protein-PII]-L-tyrosine + UMP + H(+). With respect to regulation, uridylyltransferase (UTase) activity is inhibited by glutamine, while glutamine activates uridylyl-removing (UR) activity. Modifies, by uridylylation and deuridylylation, the PII regulatory proteins (GlnB and homologs), in response to the nitrogen status of the cell that GlnD senses through the glutamine level. Under low glutamine levels, catalyzes the conversion of the PII proteins and UTP to PII-UMP and PPi, while under higher glutamine levels, GlnD hydrolyzes PII-UMP to PII and UMP (deuridylylation). Thus, controls uridylylation state and activity of the PII proteins, and plays an important role in the regulation of nitrogen assimilation and metabolism. The protein is Bifunctional uridylyltransferase/uridylyl-removing enzyme of Gluconobacter oxydans (strain 621H) (Gluconobacter suboxydans).